The following is a 466-amino-acid chain: GTP cyclohydrolase 1 (466 aa).

Positions 342, 345, and 416 each coordinate Zn(2+).

This sequence belongs to the GTP cyclohydrolase I family. In terms of assembly, homodimer.

The catalysed reaction is GTP + H2O = 7,8-dihydroneopterin 3'-triphosphate + formate + H(+). Its pathway is cofactor biosynthesis; 7,8-dihydroneopterin triphosphate biosynthesis; 7,8-dihydroneopterin triphosphate from GTP: step 1/1. GTP cyclohydrolase 1 is the first enzyme in the biosynthetic pathway leading to folic acid. In Arabidopsis thaliana (Mouse-ear cress), this protein is GTP cyclohydrolase 1 (GCH1).